A 317-amino-acid polypeptide reads, in one-letter code: Bile salt hydrolase/transferase (317 aa).

The Nucleophile; acyl-thioester intermediate role is filled by cysteine 2. Cysteine 2 and arginine 18 together coordinate deoxycholate. Asparagine 82 is a binding site for taurine.

This sequence belongs to the peptidase C59 family. As to quaternary structure, homotetramer. The tetramer consists of a dimer of dimers.

It carries out the reaction glycocholate + H2O = cholate + glycine. It catalyses the reaction glycodeoxycholate + H2O = deoxycholate + glycine. The catalysed reaction is chenodeoxycholate + glycine = glycochenodeoxycholate + H2O. The enzyme catalyses cholate + taurine = taurocholate + H2O. It carries out the reaction taurodeoxycholate + H2O = deoxycholate + taurine. It catalyses the reaction taurochenodeoxycholate + H2O = chenodeoxycholate + taurine. The catalysed reaction is an L-alpha-amino acid + cholate = an N-choloyl-L-alpha-amino acid + H2O. The enzyme catalyses an L-alpha-amino acid + taurocholate = an N-choloyl-L-alpha-amino acid + taurine. It carries out the reaction cholate + L-alanine = L-alanocholate + H2O. It catalyses the reaction taurocholate + L-alanine = L-alanocholate + taurine. The catalysed reaction is cholate + L-serine = L-serocholate + H2O. The enzyme catalyses taurocholate + L-serine = L-serocholate + taurine. It carries out the reaction cholate + L-histidine = L-histidocholate + H2O. It catalyses the reaction taurocholate + L-histidine = L-histidocholate + taurine. It participates in lipid metabolism; bile acid biosynthesis. Its function is as follows. Possesses dual functions in bile acid metabolism. Acts as a bile salt hydrolase that catalyzes the deconjugation of glycine- and taurine-linked bile salts, which occurs naturally in the intestines of humans, releasing amino acid residues and deconjugated bile salts (bile acids). Can hydrolyze the amide bond in all six major human conjugated bile salts, namely glycocholate (GCA), glycodeoxycholate (GDCA), glycochenodeoxycholate (GCDCA), taurocholate (TCA), taurodeoxycholate (TDCA) and taurochenodeoxycholate (TCDCA). Shows a slight preference for glycine-conjugated bile acids as substrates. Also acts as an amine N-acyltransferase that conjugates a wide variety of amino acids to conjugated and non-conjugated bile acids, thus producing bacterial bile acid amidates (BBAAs) - also named microbially conjugated bile acids (MCBAs) - in the gastrointestinal tract. These BBAAs may facilitate communication between the microbiota and host through the activation of human ligand-activated transcription factors. This Bifidobacterium longum subsp. longum (strain ATCC 15707 / DSM 20219 / JCM 1217 / NCTC 11818 / E194b) protein is Bile salt hydrolase/transferase.